The chain runs to 491 residues: MSDPRAVDPTARDIAEKLAPAYRTMLDAIAQVEPRIAEATRAELTDQRHSLKLIASENYASLPVLATMGTWFSDKYAEGTAGHRFYAGCQNVDTVETIAAEHACALFGAEHAYVQPHSGIDANLTAYWTILAHHIETPALSEFGARTVNDLTQVDWDTLRHRFNDQRAIGMSLDAGGHLTHGFRPNISGKMFDQRSYGTDPQTGLLDYDKVAELAREFKPLVIVAGYSAYPRRVNFAKMREIADEVGAVLMVDMAHFAGLVAGKVFTGDENPIPHAQVVTTTTHKSLRGPRGGMVLTTKDYADDVDRGCPMVLGGPLSHVMAAKAVALAEARTQTFRDYAQRVANNAKALAEGLMKRGVKLVTDGTDNHINLLDVTTSFGLTGRQAEAALLDAGVVTNRNSIPTDPNGAWYTSGIRIGTPALTSRGFGPDEFDQVAELIVTTLEATTPMTASTGKPGKAKYQIADGVAQKVHDAADELLGNFPLYPGLDLA.

(6S)-5,6,7,8-tetrahydrofolate-binding positions include Leu-173 and 177–179; that span reads GHL. Lys-285 bears the N6-(pyridoxal phosphate)lysine mark.

The protein belongs to the SHMT family. In terms of assembly, homodimer. The cofactor is pyridoxal 5'-phosphate.

The protein resides in the cytoplasm. The catalysed reaction is (6R)-5,10-methylene-5,6,7,8-tetrahydrofolate + glycine + H2O = (6S)-5,6,7,8-tetrahydrofolate + L-serine. Its pathway is one-carbon metabolism; tetrahydrofolate interconversion. It functions in the pathway amino-acid biosynthesis; glycine biosynthesis; glycine from L-serine: step 1/1. In terms of biological role, catalyzes the reversible interconversion of serine and glycine with tetrahydrofolate (THF) serving as the one-carbon carrier. This reaction serves as the major source of one-carbon groups required for the biosynthesis of purines, thymidylate, methionine, and other important biomolecules. Also exhibits THF-independent aldolase activity toward beta-hydroxyamino acids, producing glycine and aldehydes, via a retro-aldol mechanism. In Cutibacterium acnes (strain DSM 16379 / KPA171202) (Propionibacterium acnes), this protein is Serine hydroxymethyltransferase.